Here is a 207-residue protein sequence, read N- to C-terminus: ATP synthase subunit b 2 (207 aa).

A helical membrane pass occupies residues 53 to 72 (TYASQLLWLVITFGVFYLLM).

It belongs to the ATPase B chain family. F-type ATPases have 2 components, F(1) - the catalytic core - and F(0) - the membrane proton channel. F(1) has five subunits: alpha(3), beta(3), gamma(1), delta(1), epsilon(1). F(0) has three main subunits: a(1), b(2) and c(10-14). The alpha and beta chains form an alternating ring which encloses part of the gamma chain. F(1) is attached to F(0) by a central stalk formed by the gamma and epsilon chains, while a peripheral stalk is formed by the delta and b chains.

It is found in the cell inner membrane. Functionally, f(1)F(0) ATP synthase produces ATP from ADP in the presence of a proton or sodium gradient. F-type ATPases consist of two structural domains, F(1) containing the extramembraneous catalytic core and F(0) containing the membrane proton channel, linked together by a central stalk and a peripheral stalk. During catalysis, ATP synthesis in the catalytic domain of F(1) is coupled via a rotary mechanism of the central stalk subunits to proton translocation. Its function is as follows. Component of the F(0) channel, it forms part of the peripheral stalk, linking F(1) to F(0). The b'-subunit is a diverged and duplicated form of b found in plants and photosynthetic bacteria. The polypeptide is ATP synthase subunit b 2 (atpF2) (Rhizobium etli (strain ATCC 51251 / DSM 11541 / JCM 21823 / NBRC 15573 / CFN 42)).